The primary structure comprises 220 residues: MSGSTTGCGGPCGACKFLRRKCVADCVFAPYFDSVEGTSHFTAVHKVFGASNASKLLMMIPASRRLDAVVTLTYEALARLRDPVYGCVGHIFALQHQVMNLQAELAYVQTQLSTLQGLPPPNSQNNSRTEAASSSNVPLISSVDSKDNMSSSSSHIPCMSQQQEQEQPKEAIEVPTESVDLSTFFGLENPVDEDGDLNALAREFFTKYLTGGKYRPSSLI.

An LOB domain is found at 10-112 (GPCGACKFLR…AELAYVQTQL (103 aa)). The interval 117 to 172 (GLPPPNSQNNSRTEAASSSNVPLISSVDSKDNMSSSSSHIPCMSQQQEQEQPKEAI) is disordered. The segment covering 123-139 (SQNNSRTEAASSSNVPL) has biased composition (polar residues).

This sequence belongs to the LOB domain-containing protein family. In terms of tissue distribution, expressed in roots, stems and flowers.

The polypeptide is LOB domain-containing protein 31 (LBD31) (Arabidopsis thaliana (Mouse-ear cress)).